Reading from the N-terminus, the 828-residue chain is Periplasmic nitrate reductase (828 aa).

The tat-type signal signal peptide spans 1–31; it reads MKLSRRSFMKANAVAAAAAAAGLSVPGVARA. The 4Fe-4S Mo/W bis-MGD-type domain occupies 39 to 95; the sequence is IKWDKAPCRFCGTGCGVLVGTQQGRVVACQGDPDAPVNRGLNCIKGYFLPKIMYGKD. [4Fe-4S] cluster contacts are provided by Cys-46, Cys-49, Cys-53, and Cys-81. Mo-bis(molybdopterin guanine dinucleotide) contacts are provided by residues Lys-83, Gln-150, Asn-175, Cys-179, 212–219, 243–247, 262–264, Met-372, Gln-376, Asn-482, 508–509, Lys-531, Asp-558, and 718–727; these read WGSNMAEM, STFQH, QSD, SD, and TGRVLEHWHT. Phe-794 contacts substrate. Asn-802 and Lys-819 together coordinate Mo-bis(molybdopterin guanine dinucleotide).

Belongs to the prokaryotic molybdopterin-containing oxidoreductase family. NasA/NapA/NarB subfamily. Component of the periplasmic nitrate reductase NapAB complex composed of NapA and NapB. [4Fe-4S] cluster serves as cofactor. Mo-bis(molybdopterin guanine dinucleotide) is required as a cofactor. Post-translationally, predicted to be exported by the Tat system. The position of the signal peptide cleavage has not been experimentally proven.

It localises to the periplasm. It catalyses the reaction 2 Fe(II)-[cytochrome] + nitrate + 2 H(+) = 2 Fe(III)-[cytochrome] + nitrite + H2O. Catalytic subunit of the periplasmic nitrate reductase complex NapAB. Receives electrons from NapB and catalyzes the reduction of nitrate to nitrite. This is Periplasmic nitrate reductase from Salmonella paratyphi C (strain RKS4594).